Consider the following 371-residue polypeptide: MAHTVSLVAPRRQTRPVQVGSVQVGGDAPISVQSMTNTDTRDLPATLAQIHAIAQAGADLVRVSCPDMASAEAVKALVAQAPVPLIADIHFDHRLALKALACGIHCLRINPGNIGSTARVQEVVAAARERCVPIRIGVNAGSLEKQLLEKYGEPCAEAMVESALHHIHILEDLNYPEIKVSLKASDVGMTVMAYRQLASKVNYPLHLGITEAGGMRSGSVKSAIGLGLLLAEGIGDTLRVSLSADPVEEIKVGFDILKSLGLRSLGVNIIACPTCARQEFKVIDVVAELERRLAHIREPVTLSIIGCVVNGPGEAKETMVGVVGGQGENLLYQHGQTIGKRGDAELVETVVEQVEAIAQQMRAAKEKAEAE.

Positions 272, 275, 307, and 314 each coordinate [4Fe-4S] cluster.

Belongs to the IspG family. Requires [4Fe-4S] cluster as cofactor.

The enzyme catalyses (2E)-4-hydroxy-3-methylbut-2-enyl diphosphate + oxidized [flavodoxin] + H2O + 2 H(+) = 2-C-methyl-D-erythritol 2,4-cyclic diphosphate + reduced [flavodoxin]. The protein operates within isoprenoid biosynthesis; isopentenyl diphosphate biosynthesis via DXP pathway; isopentenyl diphosphate from 1-deoxy-D-xylulose 5-phosphate: step 5/6. Its function is as follows. Converts 2C-methyl-D-erythritol 2,4-cyclodiphosphate (ME-2,4cPP) into 1-hydroxy-2-methyl-2-(E)-butenyl 4-diphosphate. The chain is 4-hydroxy-3-methylbut-2-en-1-yl diphosphate synthase (flavodoxin) from Magnetococcus marinus (strain ATCC BAA-1437 / JCM 17883 / MC-1).